Here is a 413-residue protein sequence, read N- to C-terminus: Eukaryotic initiation factor 4A-11 (413 aa).

Residues 40 to 68 (ESFDAMGLQENLLRGIYAYGFEKPSAIQQ) carry the Q motif motif. The Helicase ATP-binding domain maps to 71–241 (IVPFCKGLDV…RKFMNKPVRI (171 aa)). Residue 84 to 91 (AQSGTGKT) participates in ATP binding. The DEAD box signature appears at 189–192 (DEAD). Residues 252 to 413 (GIKQFYVNVD…ELPANVADLL (162 aa)) enclose the Helicase C-terminal domain.

This sequence belongs to the DEAD box helicase family. eIF4A subfamily. As to quaternary structure, eIF4F is a multi-subunit complex, the composition of which varies with external and internal environmental conditions. It is composed of at least EIF4A, EIF4E and EIF4G.

It catalyses the reaction ATP + H2O = ADP + phosphate + H(+). ATP-dependent RNA helicase which is a subunit of the eIF4F complex involved in cap recognition and is required for mRNA binding to ribosome. In the current model of translation initiation, eIF4A unwinds RNA secondary structures in the 5'-UTR of mRNAs which is necessary to allow efficient binding of the small ribosomal subunit, and subsequent scanning for the initiator codon. This Nicotiana tabacum (Common tobacco) protein is Eukaryotic initiation factor 4A-11.